Consider the following 307-residue polypeptide: D-alanine--D-alanine ligase (307 aa).

In terms of domain architecture, ATP-grasp spans 108 to 301 (KEVFAAAGLP…FPEFCAWLVE (194 aa)). 135–185 (LPPPYVVKPNAEGSSVGVYIVHEDANGPPQLAADMPQDLMVETYVPGRELT) contributes to the ATP binding site. Positions 252, 268, and 270 each coordinate Mg(2+).

It belongs to the D-alanine--D-alanine ligase family. Mg(2+) is required as a cofactor. The cofactor is Mn(2+).

It localises to the cytoplasm. It carries out the reaction 2 D-alanine + ATP = D-alanyl-D-alanine + ADP + phosphate + H(+). The protein operates within cell wall biogenesis; peptidoglycan biosynthesis. Cell wall formation. The protein is D-alanine--D-alanine ligase of Cereibacter sphaeroides (strain ATCC 17029 / ATH 2.4.9) (Rhodobacter sphaeroides).